The following is a 422-amino-acid chain: FAD-dependent monooxygenase ptmM (422 aa).

A helical transmembrane segment spans residues 8-24 (VIIVGGSIAGLTLAHCL). FAD contacts are provided by Glu35, Gly49, Arg108, Asp308, and Ala321.

It belongs to the paxM FAD-dependent monooxygenase family. FAD is required as a cofactor.

The protein localises to the membrane. Its pathway is secondary metabolite biosynthesis. Its function is as follows. FAD-dependent monooxygenase; part of the gene cluster that mediates the biosynthesis of the indole diterpenes penitrems. The geranylgeranyl diphosphate (GGPP) synthase ptmG catalyzes the first step in penitrem biosynthesis via conversion of farnesyl pyrophosphate and isopentyl pyrophosphate into geranylgeranyl pyrophosphate (GGPP). Condensation of indole-3-glycerol phosphate with GGPP by the prenyl transferase ptmC then forms 3-geranylgeranylindole (3-GGI). Epoxidation by the FAD-dependent monooxygenase ptmM leads to a epoxidized-GGI that is substrate of the terpene cyclase ptmB for cyclization to yield paspaline. Paspaline is subsequently converted to 13-desoxypaxilline by the cytochrome P450 monooxygenase ptmP, the latter being then converted to paxilline by the cytochrome P450 monooxygenase ptmQ. Paxilline is converted to beta-paxitriol via C-10 ketoreduction by the short-chain dehydrogenase ptmH which can be monoprenylated at the C-20 by the indole diterpene prenyltransferase ptmD. A two-step elimination (acetylation and elimination) process performed by the O-acetyltransferase ptmV and ptmI leads to the production of the prenylated form of penijanthine. The FAD-linked oxidoreductase ptmO then converts the prenylated form of penijanthine into PC-M5 which is in turn transformed into PC-M4 by the aromatic dimethylallyltransferase ptmE. Five sequential oxidative transformations performed by the cytochrome P450 monooxygenases ptmK, ptmU, ptmL, ptmN and ptmJ yield the various penitrem compounds. PtmK, ptmU and ptmM are involved in the formation of the key bicyclic ring of penitrem C via the formation of the intermediates secopenitrem D and penitrem D. PtmL catalyzes the epoxidation of penitrem D and C to yield penitrem B and F, respectively. PtmJ catalyzes the last benzylic hydroxylation to convert penitrem B to prenitrem E and penitrem F to penitrem A. In Penicillium ochrochloron, this protein is FAD-dependent monooxygenase ptmM.